The sequence spans 832 residues: Subtilisin-like protease SBT2.1 (832 aa).

Positions 1-24 (MDESSLVRFVFLLCLVSSSVFCLA) are cleaved as a signal peptide. Residues 25 to 138 (ESDQNATVSS…VVLDFLVEKA (114 aa)) constitute a propeptide, activation peptide. N29 and N73 each carry an N-linked (GlcNAc...) asparagine glycan. One can recognise an Inhibitor I9 domain in the interval 36-136 (VYIVTLKDRP…ENVVLDFLVE (101 aa)). The region spanning 145–684 (FLGLPRGAWL…SGFVNATAAL (540 aa)) is the Peptidase S8 domain. The active-site Charge relay system is D172. Residue N233 is glycosylated (N-linked (GlcNAc...) asparagine). H247 (charge relay system) is an active-site residue. N272, N315, N390, N417, N470, N515, and N522 each carry an N-linked (GlcNAc...) asparagine glycan. The 96-residue stretch at 408 to 503 (LVLATHALRN…MDIPGILISS (96 aa)) folds into the PA domain. The Charge relay system role is filled by S609. 6 N-linked (GlcNAc...) asparagine glycosylation sites follow: N679, N705, N713, N723, N760, and N801.

Belongs to the peptidase S8 family.

The protein resides in the secreted. The protein is Subtilisin-like protease SBT2.1 of Arabidopsis thaliana (Mouse-ear cress).